The sequence spans 228 residues: Ribose-5-phosphate isomerase A (228 aa).

Substrate contacts are provided by residues 27–30 (TGTT), 86–89 (DGAD), and 100–103 (KGMG). The active-site Proton acceptor is the glutamate 109. Lysine 127 is a binding site for substrate.

This sequence belongs to the ribose 5-phosphate isomerase family. In terms of assembly, homodimer.

The enzyme catalyses aldehydo-D-ribose 5-phosphate = D-ribulose 5-phosphate. The protein operates within carbohydrate degradation; pentose phosphate pathway; D-ribose 5-phosphate from D-ribulose 5-phosphate (non-oxidative stage): step 1/1. Catalyzes the reversible conversion of ribose-5-phosphate to ribulose 5-phosphate. This is Ribose-5-phosphate isomerase A from Borreliella afzelii (strain PKo) (Borrelia afzelii).